We begin with the raw amino-acid sequence, 91 residues long: Cell division protein FtsB (91 aa).

The Cytoplasmic segment spans residues 1-3; sequence MRW. Residues 4–21 traverse the membrane as a helical segment; the sequence is PLIVLAVLVIVLQYPLWL. The Periplasmic portion of the chain corresponds to 22-91; that stretch reads GKGGWLRVWD…EIFVHTPRKP (70 aa). Residues 28 to 74 are a coiled coil; that stretch reads RVWDVDRQLQAQRETNQRLEQRNAGLEAEVRDLKSGNEAVEERARFE.

It belongs to the FtsB family. Part of a complex composed of FtsB, FtsL and FtsQ.

The protein localises to the cell inner membrane. Its function is as follows. Essential cell division protein. May link together the upstream cell division proteins, which are predominantly cytoplasmic, with the downstream cell division proteins, which are predominantly periplasmic. This is Cell division protein FtsB from Aromatoleum aromaticum (strain DSM 19018 / LMG 30748 / EbN1) (Azoarcus sp. (strain EbN1)).